Consider the following 587-residue polypeptide: Aspartate--tRNA ligase (587 aa).

Glu-174 provides a ligand contact to L-aspartate. The aspartate stretch occupies residues 198-201; sequence QITK. Arg-220 lines the L-aspartate pocket. ATP-binding positions include 220–222 and Gln-229; that span reads RDE. Position 443 (His-443) interacts with L-aspartate. Position 477 (Glu-477) interacts with ATP. Arg-484 is a binding site for L-aspartate. 529–532 provides a ligand contact to ATP; it reads GLDR.

This sequence belongs to the class-II aminoacyl-tRNA synthetase family. Type 1 subfamily. As to quaternary structure, homodimer.

It is found in the cytoplasm. The catalysed reaction is tRNA(Asp) + L-aspartate + ATP = L-aspartyl-tRNA(Asp) + AMP + diphosphate. Catalyzes the attachment of L-aspartate to tRNA(Asp) in a two-step reaction: L-aspartate is first activated by ATP to form Asp-AMP and then transferred to the acceptor end of tRNA(Asp). The protein is Aspartate--tRNA ligase of Streptococcus pneumoniae (strain Hungary19A-6).